A 152-amino-acid chain; its full sequence is MPVLVSNLQGKVAVDEALTGLLTRAAQEVLKAEGYGEEAEVSLVFVDDAYIHGLNRQYRGVDAPTDVLSFAMQEGEPLAGGEEELILGDVVISLQAAERQAGEYGHSLQREAAYLAVHGVLHLLGYDHQGEEERKIMRRKEEEVLGRLNLTR.

Residues H118, H122, and H128 each coordinate Zn(2+).

It belongs to the endoribonuclease YbeY family. Zn(2+) is required as a cofactor.

Its subcellular location is the cytoplasm. Its function is as follows. Single strand-specific metallo-endoribonuclease involved in late-stage 70S ribosome quality control and in maturation of the 3' terminus of the 16S rRNA. The chain is Endoribonuclease YbeY from Pelotomaculum thermopropionicum (strain DSM 13744 / JCM 10971 / SI).